The chain runs to 142 residues: Small ribosomal subunit protein bS16 (142 aa).

The segment at 88-142 (GAEGTLRQPEGKTPFVAPDNGSVIIPEAITPKAEKAEEAPAEDAAPAEDDAEKAE) is disordered. Over residues 126–142 (APAEDAAPAEDDAEKAE) the composition is skewed to acidic residues.

The protein belongs to the bacterial ribosomal protein bS16 family.

This chain is Small ribosomal subunit protein bS16, found in Kocuria rhizophila (strain ATCC 9341 / DSM 348 / NBRC 103217 / DC2201).